Reading from the N-terminus, the 161-residue chain is Cuticle protein 16.8 (161 aa).

Position 1 is a pyrrolidone carboxylic acid (glutamine 1). Over residues 1–10 (QSEPAGPPQP) the composition is skewed to pro residues. Disordered stretches follow at residues 1-44 (QSEP…YSYT) and 67-103 (ETNE…PAKP). In terms of domain architecture, Chitin-binding type R&amp;R spans 8–74 (PQPYTFSYDN…TVETNEPGTK (67 aa)). The span at 67–86 (ETNEPGTKTSNPADAQIVSN) shows a compositional bias: polar residues. Over residues 87 to 103 (AATDSYSPSPASSPAKP) the composition is skewed to low complexity.

Component of the cuticle of the tick. Binds chitin. This chain is Cuticle protein 16.8, found in Ixodes ricinus (Common tick).